A 598-amino-acid chain; its full sequence is Auxin response factor 22 (598 aa).

The segment at residues 124–226 (NSFTKVLTAS…ELRVGIRRAG (103 aa)) is a DNA-binding region (TF-B3). The region spanning 509-590 (RTCTKVQMQG…MVKKILIFKR (82 aa)) is the PB1 domain.

Belongs to the ARF family. In terms of assembly, homodimers and heterodimers.

The protein resides in the nucleus. Its function is as follows. Auxin response factors (ARFs) are transcriptional factors that bind specifically to the DNA sequence 5'-TGTCTC-3' found in the auxin-responsive promoter elements (AuxREs). Could act as transcriptional activator or repressor. Formation of heterodimers with Aux/IAA proteins may alter their ability to modulate early auxin response genes expression. This Arabidopsis thaliana (Mouse-ear cress) protein is Auxin response factor 22 (ARF22).